The following is a 453-amino-acid chain: Bifunctional protein GlmU (453 aa).

Positions 1-227 (MNKLSVVILA…LMEVEGVNNR (227 aa)) are pyrophosphorylase. UDP-N-acetyl-alpha-D-glucosamine contacts are provided by residues 9 to 12 (LAAG), Lys-23, Gln-74, 79 to 80 (GT), 101 to 103 (YGD), Gly-138, Glu-152, Asn-167, and Asn-225. Asp-103 is a binding site for Mg(2+). Asn-225 is a Mg(2+) binding site. The interval 228-248 (LQLANLERHYQRKQVEKLLLA) is linker. Residues 249–453 (GVTFADPARF…ISNWQRPKRK (205 aa)) are N-acetyltransferase. UDP-N-acetyl-alpha-D-glucosamine is bound by residues Arg-331 and Lys-349. The active-site Proton acceptor is His-361. UDP-N-acetyl-alpha-D-glucosamine-binding residues include Tyr-364 and Asn-375. Acetyl-CoA-binding positions include Ala-378, 384 to 385 (NY), Ser-403, Ala-421, and Arg-438.

This sequence in the N-terminal section; belongs to the N-acetylglucosamine-1-phosphate uridyltransferase family. In the C-terminal section; belongs to the transferase hexapeptide repeat family. Homotrimer. Mg(2+) is required as a cofactor.

The protein resides in the cytoplasm. The enzyme catalyses alpha-D-glucosamine 1-phosphate + acetyl-CoA = N-acetyl-alpha-D-glucosamine 1-phosphate + CoA + H(+). It carries out the reaction N-acetyl-alpha-D-glucosamine 1-phosphate + UTP + H(+) = UDP-N-acetyl-alpha-D-glucosamine + diphosphate. The protein operates within nucleotide-sugar biosynthesis; UDP-N-acetyl-alpha-D-glucosamine biosynthesis; N-acetyl-alpha-D-glucosamine 1-phosphate from alpha-D-glucosamine 6-phosphate (route II): step 2/2. Its pathway is nucleotide-sugar biosynthesis; UDP-N-acetyl-alpha-D-glucosamine biosynthesis; UDP-N-acetyl-alpha-D-glucosamine from N-acetyl-alpha-D-glucosamine 1-phosphate: step 1/1. It participates in bacterial outer membrane biogenesis; LPS lipid A biosynthesis. Catalyzes the last two sequential reactions in the de novo biosynthetic pathway for UDP-N-acetylglucosamine (UDP-GlcNAc). The C-terminal domain catalyzes the transfer of acetyl group from acetyl coenzyme A to glucosamine-1-phosphate (GlcN-1-P) to produce N-acetylglucosamine-1-phosphate (GlcNAc-1-P), which is converted into UDP-GlcNAc by the transfer of uridine 5-monophosphate (from uridine 5-triphosphate), a reaction catalyzed by the N-terminal domain. This Histophilus somni (strain 2336) (Haemophilus somnus) protein is Bifunctional protein GlmU.